The sequence spans 67 residues: Large ribosomal subunit protein bL35 (67 aa).

A compositionally biased stretch (basic residues) spans 1–16; it reads MPKMKTKSSAKKRFRV. The tract at residues 1-23 is disordered; the sequence is MPKMKTKSSAKKRFRVRPGGTVK.

The protein belongs to the bacterial ribosomal protein bL35 family.

The chain is Large ribosomal subunit protein bL35 from Variovorax paradoxus (strain S110).